The sequence spans 589 residues: Enhancer of polycomb-like protein 1 (589 aa).

Disordered regions lie at residues 298–339 (GDED…RPAE), 403–430 (MTPP…PNPP), 468–497 (LPSP…DAPV), and 516–589 (LQTV…QPVS). Residues 474-487 (DLSEEQSDRWKYDQ) show a composition bias toward basic and acidic residues. The span at 557 to 566 (PQPNQSQSLP) shows a compositional bias: low complexity. Residues 567–589 (LPQPQQPVAQPQPQPQPQAQPVS) are compositionally biased toward pro residues.

Belongs to the enhancer of polycomb family. In terms of assembly, component of the NuA4 histone acetyltransferase complex.

The protein localises to the nucleus. Component of the NuA4 histone acetyltransferase complex which is involved in transcriptional activation of selected genes principally by acetylation of nucleosomal histone H4 and H2A. The NuA4 complex is also involved in DNA repair. Involved in gene silencing by neighboring heterochromatin, blockage of the silencing spreading along the chromosome, and required for cell cycle progression through G2/M. This Neurospora crassa (strain ATCC 24698 / 74-OR23-1A / CBS 708.71 / DSM 1257 / FGSC 987) protein is Enhancer of polycomb-like protein 1 (epl-1).